The primary structure comprises 160 residues: SsrA-binding protein (160 aa).

Residues 131–160 (KKEFDKRHTEKERDSDREIQRAMRTKGKDD) form a disordered region.

It belongs to the SmpB family.

The protein resides in the cytoplasm. Functionally, required for rescue of stalled ribosomes mediated by trans-translation. Binds to transfer-messenger RNA (tmRNA), required for stable association of tmRNA with ribosomes. tmRNA and SmpB together mimic tRNA shape, replacing the anticodon stem-loop with SmpB. tmRNA is encoded by the ssrA gene; the 2 termini fold to resemble tRNA(Ala) and it encodes a 'tag peptide', a short internal open reading frame. During trans-translation Ala-aminoacylated tmRNA acts like a tRNA, entering the A-site of stalled ribosomes, displacing the stalled mRNA. The ribosome then switches to translate the ORF on the tmRNA; the nascent peptide is terminated with the 'tag peptide' encoded by the tmRNA and targeted for degradation. The ribosome is freed to recommence translation, which seems to be the essential function of trans-translation. The chain is SsrA-binding protein from Stutzerimonas stutzeri (strain A1501) (Pseudomonas stutzeri).